The chain runs to 127 residues: Ribosome-binding factor A (127 aa).

Belongs to the RbfA family. As to quaternary structure, monomer. Binds 30S ribosomal subunits, but not 50S ribosomal subunits or 70S ribosomes.

It localises to the cytoplasm. Functionally, one of several proteins that assist in the late maturation steps of the functional core of the 30S ribosomal subunit. Associates with free 30S ribosomal subunits (but not with 30S subunits that are part of 70S ribosomes or polysomes). Required for efficient processing of 16S rRNA. May interact with the 5'-terminal helix region of 16S rRNA. The polypeptide is Ribosome-binding factor A (Actinobacillus pleuropneumoniae serotype 7 (strain AP76)).